The chain runs to 563 residues: Kelch repeat and BTB domain-containing protein 1 (563 aa).

The 68-residue stretch at 21-88 (CDINIVINDE…IYGIPLSLTN (68 aa)) folds into the BTB domain. The BACK domain maps to 123 to 219 (CIDFYIYADK…SLLSPQVIKS (97 aa)). 6 Kelch repeats span residues 252-297 (IELI…VMDN), 298-346 (IIYM…VDDE), 347-395 (YIYC…MLNG), 397-441 (IYVI…VHAG), 442-492 (KIYI…SVHN), and 494-540 (LYVG…PIKH).

In terms of assembly, interacts (via BTB domain) with host CUL3.

Its subcellular location is the host cytoplasm. Functionally, probable substrate-specific adapter of CUL3-containing E3 ubiquitin-protein ligases which mediate the ubiquitination and subsequent proteasomal degradation of host target proteins. This chain is Kelch repeat and BTB domain-containing protein 1 (KBTB1), found in Mus musculus (Mouse).